Here is a 244-residue protein sequence, read N- to C-terminus: MSTSKRKRGDDANWSKRVTKKKPSSAGLKRAGSKADRPSLQIQTLQHAGTTMITVPSGGVCDLINTYARGSDEGNRHTSETLTYKIAVDYHFVADAAACPYSNTGTGVMWLVYDTTPGGQAPTPQTIFAYPDTLKAWPATWKVSRELCHRFVVKRRWLFNMETDGRIGSDIPPSNASWKPCKRNIYFHKFTSGLGVRTQWKNVTDGGVGAIQRGALYMVIAPGNGLTFTAHGQTRLYFKSVGNQ.

The short motif at 1–24 (MSTSKRKRGDDANWSKRVTKKKPS) is the Bipartite nuclear localization signal element. The tract at residues 1 to 39 (MSTSKRKRGDDANWSKRVTKKKPSSAGLKRAGSKADRPS) is disordered.

Belongs to the geminiviridae capsid protein family. In terms of assembly, homomultimer. Interacts with the movement protein. Binds to single-stranded and double-stranded viral DNA.

The protein localises to the virion. It localises to the host nucleus. In terms of biological role, encapsidates the viral genome into characteristic twinned ('geminate') particles. Binds the genomic viral ssDNA and shuttles it into and out of the cell nucleus. Plays a role in protection of the genome from degradation, virus acquisition and transmission by insect vectors, infectivity, and systemic movement. The CP of monopartite geminiviruses is absolutely essential for virus movement. The protein is Capsid protein of Maize streak virus genotype A (isolate Kenya) (MSV).